The sequence spans 223 residues: DNA mismatch repair protein MutH (223 aa).

It belongs to the MutH family.

It localises to the cytoplasm. Sequence-specific endonuclease that cleaves unmethylated GATC sequences. It is involved in DNA mismatch repair. The chain is DNA mismatch repair protein MutH from Shewanella oneidensis (strain ATCC 700550 / JCM 31522 / CIP 106686 / LMG 19005 / NCIMB 14063 / MR-1).